We begin with the raw amino-acid sequence, 506 residues long: Cysteine--tRNA ligase (506 aa).

Position 34 (cysteine 34) interacts with Zn(2+). The short motif at 36–46 (PTVYDFAHIGN) is the 'HIGH' region element. Cysteine 230, histidine 269, and glutamate 273 together coordinate Zn(2+). The 'KMSKS' region signature appears at 302 to 306 (KMSKS). Lysine 305 contacts ATP.

This sequence belongs to the class-I aminoacyl-tRNA synthetase family. In terms of assembly, monomer. Requires Zn(2+) as cofactor.

It localises to the cytoplasm. The catalysed reaction is tRNA(Cys) + L-cysteine + ATP = L-cysteinyl-tRNA(Cys) + AMP + diphosphate. The chain is Cysteine--tRNA ligase from Brucella suis biovar 1 (strain 1330).